Reading from the N-terminus, the 732-residue chain is DNA ligase (732 aa).

NAD(+) is bound by residues 47-51, 96-97, and glutamate 133; these read DAEYD and SI. The N6-AMP-lysine intermediate role is filled by lysine 135. Residues arginine 156, glutamate 196, lysine 317, and lysine 341 each contribute to the NAD(+) site. Residues cysteine 470, cysteine 473, cysteine 488, and cysteine 494 each coordinate Zn(2+). Residues 653–732 form the BRCT domain; it reads RATLPLAGKT…AGMLALLQGR (80 aa).

This sequence belongs to the NAD-dependent DNA ligase family. LigA subfamily. Mg(2+) serves as cofactor. The cofactor is Mn(2+).

It catalyses the reaction NAD(+) + (deoxyribonucleotide)n-3'-hydroxyl + 5'-phospho-(deoxyribonucleotide)m = (deoxyribonucleotide)n+m + AMP + beta-nicotinamide D-nucleotide.. In terms of biological role, DNA ligase that catalyzes the formation of phosphodiester linkages between 5'-phosphoryl and 3'-hydroxyl groups in double-stranded DNA using NAD as a coenzyme and as the energy source for the reaction. It is essential for DNA replication and repair of damaged DNA. This chain is DNA ligase, found in Paracidovorax citrulli (strain AAC00-1) (Acidovorax citrulli).